A 595-amino-acid chain; its full sequence is Miltiradiene synthase KSL1, chloroplastic (595 aa).

The N-terminal 47 residues, 1-47 (MSLAFNPAATAFSGNGARSRRENFPVKHVTVRGFPMITNKSSFAVKC), are a transit peptide targeting the chloroplast. Positions 334, 338, 478, and 486 each coordinate Mg(2+). Residues 334 to 338 (DDFFD) carry the DDXXD motif motif.

The protein belongs to the terpene synthase family. It depends on Mg(2+) as a cofactor.

The protein resides in the plastid. It localises to the chloroplast. The enzyme catalyses (+)-copalyl diphosphate = miltiradiene + diphosphate. The protein operates within secondary metabolite biosynthesis; terpenoid biosynthesis. Functionally, involved in tanshinone biosynthesis in hairy roots. Catalyzes the conversion of copalyl diphosphate (CPP) to miltiradiene. This Salvia miltiorrhiza (Chinese sage) protein is Miltiradiene synthase KSL1, chloroplastic.